We begin with the raw amino-acid sequence, 513 residues long: ATP synthase subunit alpha 1 (513 aa).

Residue 169–176 (GDRQTGKT) participates in ATP binding.

The protein belongs to the ATPase alpha/beta chains family. In terms of assembly, F-type ATPases have 2 components, CF(1) - the catalytic core - and CF(0) - the membrane proton channel. CF(1) has five subunits: alpha(3), beta(3), gamma(1), delta(1), epsilon(1). CF(0) has three main subunits: a(1), b(2) and c(9-12). The alpha and beta chains form an alternating ring which encloses part of the gamma chain. CF(1) is attached to CF(0) by a central stalk formed by the gamma and epsilon chains, while a peripheral stalk is formed by the delta and b chains.

It localises to the cell inner membrane. The catalysed reaction is ATP + H2O + 4 H(+)(in) = ADP + phosphate + 5 H(+)(out). Functionally, produces ATP from ADP in the presence of a proton gradient across the membrane. The alpha chain is a regulatory subunit. The chain is ATP synthase subunit alpha 1 from Nitrosospira multiformis (strain ATCC 25196 / NCIMB 11849 / C 71).